The sequence spans 271 residues: MATH domain and coiled-coil domain-containing protein At3g27040 (271 aa).

An MATH domain is found at 7–133 (DKKFTWVIKN…NGEVKIVAEV (127 aa)). Residues 230-271 (KLDWLEKKLKETGKSRLQEIEEDLKDLKVKCADMDALLDFLR) are a coiled coil.

The chain is MATH domain and coiled-coil domain-containing protein At3g27040 from Arabidopsis thaliana (Mouse-ear cress).